Reading from the N-terminus, the 522-residue chain is MTELKNELIRHSAADLAAKLASREVTAVEVTQAHLDRIADVDGQVNAFLHVNSEEALAVAAEVDAARAAGGSAAEELHALAGVPIAVKDLIVTIGQPTTAGSKILEGWHSPYDATVVKKLRAAKMPILGKTNLDEFAMGSSTEHSAYGPTRNPWDLDRIPGGSGGGSAAAVAAFEAPLALGTDTGGSIRQPGAVTGTVGVKPTYGAVSRYGAIAMASSLDQIGPVSRTVLDSALLQEVIGGHDPFDSTSLTDPFNDLVAAARVGNVAGMKIGIVKELHGEGYQAGVENRFNESLQLLKDAGAEIVEVSCPNLKYALGAYYLIMPSEVSSNLAKFDGVRFGMRVLPKDGPMTIERVMGATRAAGFGDEVKRRIILGTYALSAGYYDAYYGSAQKVRTLIQRDFDAAFAKADVLISPTAPTTAFKLGEKLDDPLAMYLNDVATIPANLAGIPGLSLPGGLADEDGLPVGIQLLAPARQDARLYRVGAVLESILEEKWGGPILAQAPDLKTAVLGAVSTTAGGSN.

Residues K88 and S163 each act as charge relay system in the active site. Catalysis depends on S187, which acts as the Acyl-ester intermediate.

Belongs to the amidase family. GatA subfamily. Heterotrimer of A, B and C subunits.

The catalysed reaction is L-glutamyl-tRNA(Gln) + L-glutamine + ATP + H2O = L-glutaminyl-tRNA(Gln) + L-glutamate + ADP + phosphate + H(+). In terms of biological role, allows the formation of correctly charged Gln-tRNA(Gln) through the transamidation of misacylated Glu-tRNA(Gln) in organisms which lack glutaminyl-tRNA synthetase. The reaction takes place in the presence of glutamine and ATP through an activated gamma-phospho-Glu-tRNA(Gln). This Paenarthrobacter aurescens (strain TC1) protein is Glutamyl-tRNA(Gln) amidotransferase subunit A.